Reading from the N-terminus, the 218-residue chain is MEISMKIILLGAPGAGKGTQAQFIMNKFGIPQISTGDMFRAAIKAGTELGKQAKALMDEGKLVPDELTVALVKDRIAQPDCANGFLLDGFPRTIPQADALKDSGVNIDYVLEFDVPDEVIVERMSGRRVHQASGRSYHIVYNPPKVEGKDDVTGEDLIIRADDKPETVLDRLAVYHKQTQPLVDYYQAEANAGNTKYFRLDGTKKVEEVSAELNSILG.

14–19 (GAGKGT) provides a ligand contact to ATP. Positions 34–63 (STGDMFRAAIKAGTELGKQAKALMDEGKLV) are NMP. AMP contacts are provided by residues threonine 35, arginine 40, 61 to 63 (KLV), 89 to 92 (GFPR), and glutamine 96. The LID stretch occupies residues 126 to 163 (GRRVHQASGRSYHIVYNPPKVEGKDDVTGEDLIIRADD). Residues arginine 127 and 136–137 (SY) each bind ATP. The AMP site is built by arginine 160 and arginine 171. Lysine 204 contacts ATP.

The protein belongs to the adenylate kinase family. As to quaternary structure, monomer.

It localises to the cytoplasm. The enzyme catalyses AMP + ATP = 2 ADP. It functions in the pathway purine metabolism; AMP biosynthesis via salvage pathway; AMP from ADP: step 1/1. Catalyzes the reversible transfer of the terminal phosphate group between ATP and AMP. Plays an important role in cellular energy homeostasis and in adenine nucleotide metabolism. The chain is Adenylate kinase from Mannheimia succiniciproducens (strain KCTC 0769BP / MBEL55E).